The sequence spans 242 residues: Type III pantothenate kinase (242 aa).

ATP is bound at residue 7–14 (DLGNSRFK). Substrate is bound by residues Y91 and 98-101 (GVDR). D100 functions as the Proton acceptor in the catalytic mechanism. T121 lines the ATP pocket. Residue T171 participates in substrate binding.

This sequence belongs to the type III pantothenate kinase family. Homodimer. The cofactor is NH4(+). Requires K(+) as cofactor.

It localises to the cytoplasm. The enzyme catalyses (R)-pantothenate + ATP = (R)-4'-phosphopantothenate + ADP + H(+). It participates in cofactor biosynthesis; coenzyme A biosynthesis; CoA from (R)-pantothenate: step 1/5. Catalyzes the phosphorylation of pantothenate (Pan), the first step in CoA biosynthesis. This chain is Type III pantothenate kinase, found in Xanthomonas campestris pv. campestris (strain B100).